Consider the following 301-residue polypeptide: Putative S-adenosyl-L-methionine-dependent methyltransferase MMAR_4850 (301 aa).

S-adenosyl-L-methionine is bound by residues Asp-127 and 156–157 (DL).

This sequence belongs to the UPF0677 family.

Functionally, exhibits S-adenosyl-L-methionine-dependent methyltransferase activity. The sequence is that of Putative S-adenosyl-L-methionine-dependent methyltransferase MMAR_4850 from Mycobacterium marinum (strain ATCC BAA-535 / M).